Here is a 499-residue protein sequence, read N- to C-terminus: UPF0159 protein Ta1429 (499 aa).

ThyX domains are found at residues 1 to 246 (MIDR…ALSQ) and 271 to 476 (EKVR…IKFV).

It belongs to the UPF0159 family.

The polypeptide is UPF0159 protein Ta1429 (Thermoplasma acidophilum (strain ATCC 25905 / DSM 1728 / JCM 9062 / NBRC 15155 / AMRC-C165)).